The primary structure comprises 678 residues: DNA ligase (678 aa).

Residues Asp-36 to Asp-40, Ser-85 to Leu-86, and Glu-117 contribute to the NAD(+) site. Lys-119 (N6-AMP-lysine intermediate) is an active-site residue. The NAD(+) site is built by Arg-140, Glu-177, Lys-294, and Lys-318. 4 residues coordinate Zn(2+): Cys-412, Cys-415, Cys-430, and Cys-435. The region spanning Ile-598–Glu-678 is the BRCT domain.

Belongs to the NAD-dependent DNA ligase family. LigA subfamily. Mg(2+) serves as cofactor. The cofactor is Mn(2+).

It carries out the reaction NAD(+) + (deoxyribonucleotide)n-3'-hydroxyl + 5'-phospho-(deoxyribonucleotide)m = (deoxyribonucleotide)n+m + AMP + beta-nicotinamide D-nucleotide.. In terms of biological role, DNA ligase that catalyzes the formation of phosphodiester linkages between 5'-phosphoryl and 3'-hydroxyl groups in double-stranded DNA using NAD as a coenzyme and as the energy source for the reaction. It is essential for DNA replication and repair of damaged DNA. This chain is DNA ligase, found in Gloeothece citriformis (strain PCC 7424) (Cyanothece sp. (strain PCC 7424)).